Consider the following 322-residue polypeptide: Phospho-N-acetylmuramoyl-pentapeptide-transferase (322 aa).

Transmembrane regions (helical) follow at residues 6-26 (ASCIALVSSLTLTVIFLPLLI), 54-74 (TMGGTIFVIAAVISVIWVTAW), 82-102 (VWILVISLLGYGIIGFLDDGI), 122-142 (IIIAVVIVLIASSDHFNFGLY), 145-165 (FAGVVHSVALFVIFIIFWLVG), 176-196 (LDGLATGLSVVAYGTYAYIAF), 200-220 (NFAILAFCMSVIGGLIAFFIF), 227-247 (IFMGDAGSLALGGGLATVSIM), 255-275 (LLVGIVFVCETASVIMQVISF), and 302-322 (VDIVFWIVGLVGSILYLAIWG).

Belongs to the glycosyltransferase 4 family. MraY subfamily. Mg(2+) serves as cofactor.

Its subcellular location is the cell membrane. It carries out the reaction UDP-N-acetyl-alpha-D-muramoyl-L-alanyl-gamma-D-glutamyl-L-lysyl-D-alanyl-D-alanine + di-trans,octa-cis-undecaprenyl phosphate = Mur2Ac(oyl-L-Ala-gamma-D-Glu-L-Lys-D-Ala-D-Ala)-di-trans,octa-cis-undecaprenyl diphosphate + UMP. Its pathway is cell wall biogenesis; peptidoglycan biosynthesis. In terms of biological role, catalyzes the initial step of the lipid cycle reactions in the biosynthesis of the cell wall peptidoglycan: transfers peptidoglycan precursor phospho-MurNAc-pentapeptide from UDP-MurNAc-pentapeptide onto the lipid carrier undecaprenyl phosphate, yielding undecaprenyl-pyrophosphoryl-MurNAc-pentapeptide, known as lipid I. The protein is Phospho-N-acetylmuramoyl-pentapeptide-transferase of Lactobacillus helveticus (strain DPC 4571).